A 356-amino-acid chain; its full sequence is Carbamoyl phosphate synthase small chain (356 aa).

Residues 1–160 are CPSase; that stretch reads MKGYLKLEDG…TKKPYRIAGI (160 aa). Residues Ser-45, Gly-211, and Gly-213 each coordinate L-glutamine. One can recognise a Glutamine amidotransferase type-1 domain in the interval 163-350; that stretch reads KLAFIDLGTK…MDIVMVYKRR (188 aa). The Nucleophile role is filled by Cys-238. The L-glutamine site is built by Leu-239, Gln-242, Asn-280, Gly-282, and Tyr-283. Active-site residues include His-323 and Glu-325.

The protein belongs to the CarA family. In terms of assembly, composed of two chains; the small (or glutamine) chain promotes the hydrolysis of glutamine to ammonia, which is used by the large (or ammonia) chain to synthesize carbamoyl phosphate. Tetramer of heterodimers (alpha,beta)4.

It catalyses the reaction hydrogencarbonate + L-glutamine + 2 ATP + H2O = carbamoyl phosphate + L-glutamate + 2 ADP + phosphate + 2 H(+). It carries out the reaction L-glutamine + H2O = L-glutamate + NH4(+). The protein operates within amino-acid biosynthesis; L-arginine biosynthesis; carbamoyl phosphate from bicarbonate: step 1/1. Its pathway is pyrimidine metabolism; UMP biosynthesis via de novo pathway; (S)-dihydroorotate from bicarbonate: step 1/3. In terms of biological role, small subunit of the glutamine-dependent carbamoyl phosphate synthetase (CPSase). CPSase catalyzes the formation of carbamoyl phosphate from the ammonia moiety of glutamine, carbonate, and phosphate donated by ATP, constituting the first step of 2 biosynthetic pathways, one leading to arginine and/or urea and the other to pyrimidine nucleotides. The small subunit (glutamine amidotransferase) binds and cleaves glutamine to supply the large subunit with the substrate ammonia. This Caldanaerobacter subterraneus subsp. tengcongensis (strain DSM 15242 / JCM 11007 / NBRC 100824 / MB4) (Thermoanaerobacter tengcongensis) protein is Carbamoyl phosphate synthase small chain.